Consider the following 294-residue polypeptide: Protein C3orf33 homolog (294 aa).

Alanine 2 is subject to N-acetylalanine. Residues 36–53 traverse the membrane as a helical segment; that stretch reads LVQNISTGMAIAGIMLLI. Residues 244-271 form a disordered region; it reads KPAGADLGSTKDSYHDSRRRASGKGKDS.

It localises to the membrane. In terms of biological role, may play a role in transcription regulation. The protein is Protein C3orf33 homolog of Mus musculus (Mouse).